A 603-amino-acid chain; its full sequence is Geraniol synthase Tps-5031G8, chloroplastic (603 aa).

The transit peptide at 1-35 (MCSISQKVVIGLNKAAANNCLQNLDRRGFKTRRVS) directs the protein to the chloroplast. (2E)-geranyl diphosphate-binding residues include Arg-319, Asp-356, Asp-360, Arg-497, and Asp-500. Positions 356 and 360 each coordinate Mg(2+). The DDXXD motif signature appears at 356-360 (DDVYD). Mg(2+) contacts are provided by Asp-500, Thr-504, and Glu-508.

This sequence belongs to the terpene synthase family. Tpsb subfamily. Monomer. Mg(2+) serves as cofactor. The cofactor is Mn(2+).

It localises to the plastid. The protein localises to the chloroplast. It catalyses the reaction (2E)-geranyl diphosphate + H2O = (2E)-geraniol + diphosphate. It participates in secondary metabolite biosynthesis; terpenoid biosynthesis. Its function is as follows. Monoterpene synthase (mono-TPS) involved in the biosynthesis of monoterpenes natural products. Catalyzes the conversion of (2E)-geranyl diphosphate (GPP) into geraniol. This chain is Geraniol synthase Tps-5031G8, chloroplastic, found in Perilla frutescens var. hirtella (Perilla citriodora).